A 743-amino-acid chain; its full sequence is Glycerol-3-phosphate O-acyltransferase 2 (743 aa).

At 1–34 (MSAPAADHNAAKPIPHVPQASRRYKNSYNGFVYN) the chain is on the lumenal side. Residues 35–55 (IHTWLYDVSVFLFNILFTIFF) traverse the membrane as a helical segment. At 56–442 (REIKVRGAYN…TKLEALRCFV (387 aa)) the chain is on the cytoplasmic side. Residues 443-457 (TLIVRLIKFSVFAIL) traverse the membrane as a helical segment. Residue Ser-458 is a topological domain, lumenal. A helical membrane pass occupies residues 459-473 (LPGSILFTPIFIICR). Residues 474–501 (VYSEKKAKEGLKKSLVKIKGTDLLATWK) are Cytoplasmic-facing. Residues 502 to 522 (LIVALILAPILYVTYSILLII) traverse the membrane as a helical segment. Residues 523-531 (LARKQHYCR) lie on the Lumenal side of the membrane. The helical transmembrane segment at 532-552 (IWVPSNNAFIQFVYFYALLVF) threads the bilayer. Topologically, residues 553–743 (TTYSSLKTGE…RQKREHEKKE (191 aa)) are cytoplasmic. A phosphoserine mark is found at Ser-632, Ser-637, Ser-647, Ser-651, Ser-654, Ser-657, Ser-664, Ser-668, and Ser-671. Thr-673 carries the post-translational modification Phosphothreonine. The disordered stretch occupies residues 682 to 743 (KQGQWKSEGE…RQKREHEKKE (62 aa)). Ser-688 is modified (phosphoserine). Over residues 691 to 700 (ETSEDEDEFD) the composition is skewed to acidic residues. Thr-692 carries the phosphothreonine modification. Ser-693 bears the Phosphoserine mark.

It belongs to the GPAT/DAPAT family. Phosphorylated at a conserved motif involving Ser-664, Ser-668 and Ser-671. This phosphorylation plays a critical role for efficient TAG mobilization. Phosphorylation deficiency at this motif increases the enzyme activity and consequently induces de novo formation of phosphatidic acid.

It localises to the lipid droplet. The protein resides in the endoplasmic reticulum membrane. The catalysed reaction is sn-glycerol 3-phosphate + an acyl-CoA = a 1-acyl-sn-glycero-3-phosphate + CoA. It carries out the reaction dihydroxyacetone phosphate + an acyl-CoA = a 1-acylglycerone 3-phosphate + CoA. The enzyme catalyses sn-glycerol 3-phosphate + hexadecanoyl-CoA = 1-hexadecanoyl-sn-glycero-3-phosphate + CoA. It catalyses the reaction (9Z)-hexadecenoyl-CoA + sn-glycerol 3-phosphate = 1-(9Z-hexadecenoyl)-sn-glycero-3-phosphate + CoA. The catalysed reaction is sn-glycerol 3-phosphate + octadecanoyl-CoA = 1-octadecanoyl-sn-glycero-3-phosphate + CoA. It carries out the reaction sn-glycerol 3-phosphate + (9Z)-octadecenoyl-CoA = 1-(9Z-octadecenoyl)-sn-glycero-3-phosphate + CoA. It functions in the pathway phospholipid metabolism; CDP-diacylglycerol biosynthesis; CDP-diacylglycerol from sn-glycerol 3-phosphate: step 1/3. In terms of biological role, dual substrate-specific glycerol-3-phosphate/dihydroxyacetone phosphate sn-1 acyltransferase, catalyzing the first and committed reaction in the de novo synthesis of glycerophospholipids and triacylglycerols (TAGs). Can use both Gly-3-P and dihydroxyacetone phosphate with similar efficiencies and has a broad fatty acyl-CoA specificity profile. Transfers a fatty acid from fatty acyl-CoA to the sn-1 position of glycerol-3-phosphate to produce lysophosphatidic acid (LysoPA). These lipids not only are precursors of glycerolipids, but also are dynamic components of signal transduction systems that control cell physiology. This chain is Glycerol-3-phosphate O-acyltransferase 2 (GPT2), found in Saccharomyces cerevisiae (strain ATCC 204508 / S288c) (Baker's yeast).